Here is a 172-residue protein sequence, read N- to C-terminus: MAEEIKDKQEFQIGAEEPDSSNVASQAKRSAESELASTADANDKKSKKKRRRRNYDDLDEKIAQEDKASATSGANKEEDSESEVDDEKLDQMMVKEDEEEDDLSEIDSSNIITTGRRTRGKIIDYKKTAEKLEKNGEVGKDDDDDEDDEENDEEFKDPAAPAPAPASPTEPK.

Composition is skewed to basic and acidic residues over residues 1–10 (MAEEIKDKQE) and 54–68 (NYDD…EDKA). A disordered region spans residues 1–172 (MAEEIKDKQE…PAPASPTEPK (172 aa)). 2 stretches are compositionally biased toward acidic residues: residues 78–88 (EDSESEVDDEK) and 96–105 (EDEEEDDLSE). Basic and acidic residues predominate over residues 121–139 (KIIDYKKTAEKLEKNGEVG). The span at 140 to 155 (KDDDDDEDDEENDEEF) shows a compositional bias: acidic residues. Over residues 160-172 (APAPAPASPTEPK) the composition is skewed to pro residues.

The protein belongs to the CHZ1 family. Forms a heterotrimer with H2A.Z-H2B, stabilizing the association of the histone dimer. Also, with a lower affinity, forms a heterotrimer with H2A-H2B.

It localises to the nucleus. In terms of biological role, forms a chaperone-bound H2A.Z-H2B complex that acts as a source for SWR1 complex-dependent H2A to H2A.Z histone replacement in chromatin. This Kluyveromyces lactis (strain ATCC 8585 / CBS 2359 / DSM 70799 / NBRC 1267 / NRRL Y-1140 / WM37) (Yeast) protein is Histone H2A.Z-specific chaperone CHZ1 (CHZ1).